The primary structure comprises 518 residues: Coiled-coil domain-containing protein 82 (518 aa).

The span at Met-1 to Lys-14 shows a compositional bias: basic residues. The segment at Met-1–Gly-266 is disordered. Residues Gln-16–His-27 are compositionally biased toward basic and acidic residues. A compositionally biased stretch (acidic residues) spans Asp-38–Leu-67. Positions Asp-68–Lys-89 are enriched in basic and acidic residues. Over residues Ser-92 to Ser-107 the composition is skewed to polar residues. Residues Glu-111–His-127 are compositionally biased toward basic and acidic residues. 2 positions are modified to phosphoserine: Ser-170 and Ser-194. Over residues Asp-191–Glu-201 the composition is skewed to acidic residues. Thr-202 is subject to Phosphothreonine. The stretch at Glu-204–Asn-232 forms a coiled coil. Positions His-215–Ser-225 are enriched in basic and acidic residues. A compositionally biased stretch (acidic residues) spans Gly-249–Gly-266. A Phosphoserine modification is found at Ser-305.

This is Coiled-coil domain-containing protein 82 (Ccdc82) from Mus musculus (Mouse).